A 275-amino-acid chain; its full sequence is 2,3,4,5-tetrahydropyridine-2,6-dicarboxylate N-succinyltransferase (275 aa).

Residues arginine 104 and aspartate 141 each coordinate substrate.

It belongs to the transferase hexapeptide repeat family. As to quaternary structure, homotrimer.

The protein resides in the cytoplasm. The catalysed reaction is (S)-2,3,4,5-tetrahydrodipicolinate + succinyl-CoA + H2O = (S)-2-succinylamino-6-oxoheptanedioate + CoA. The protein operates within amino-acid biosynthesis; L-lysine biosynthesis via DAP pathway; LL-2,6-diaminopimelate from (S)-tetrahydrodipicolinate (succinylase route): step 1/3. The chain is 2,3,4,5-tetrahydropyridine-2,6-dicarboxylate N-succinyltransferase from Aeromonas hydrophila subsp. hydrophila (strain ATCC 7966 / DSM 30187 / BCRC 13018 / CCUG 14551 / JCM 1027 / KCTC 2358 / NCIMB 9240 / NCTC 8049).